Here is a 388-residue protein sequence, read N- to C-terminus: Mannitol-1-phosphate 5-dehydrogenase (388 aa).

5 to 16 (AIQFGGGNIGRG) contributes to the NAD(+) binding site. Lys213 is a catalytic residue.

Belongs to the mannitol dehydrogenase family. In terms of assembly, monomer.

It catalyses the reaction D-mannitol 1-phosphate + NAD(+) = beta-D-fructose 6-phosphate + NADH + H(+). Functionally, catalyzes the NAD(H)-dependent interconversion of D-fructose 6-phosphate and D-mannitol 1-phosphate in the metabolism of mannitol. Has a strong preference for NADH over NADPH. This chain is Mannitol-1-phosphate 5-dehydrogenase (mpdA), found in Aspergillus niger (strain ATCC MYA-4892 / CBS 513.88 / FGSC A1513).